The primary structure comprises 394 residues: MAKIETRTEPMVLNMGPHHPSMHGVLRLIVTLDGEDVIDCEPVIGYLHRGMEKIAENRTNVMYVPYVSRWDYAAGMFNEAITVNAPEKLADIAVPKRAQYIRVIMLELNRIANHLLWLGPFMADVGAQTPFFYIFREREMIYDLWEAATGMRLINNNYFRIGGVAVDLPYGWVDKCVDFCDYFDPKVDEYEKLITNNPIFRRRIEGIGCITRDEAINWGLSGPMLRASGVKWDLRKVDHYECYDDFDWEVHWETAGDCFARYLVRIREMRESVKIIRQALKGLPGGPYENLEAKRMAEGKKSAWNDFDYQYIAKKVAPTFKIPKGEHYVRLESGKGELGIFIVGNDDVFPWRWKIRAADFNNLQILPHILKGVKVADIMAILGSIDIIMGSVDR.

The protein belongs to the complex I 49 kDa subunit family. In terms of assembly, NDH-1 can be composed of about 15 different subunits; different subcomplexes with different compositions have been identified which probably have different functions.

The protein localises to the cellular thylakoid membrane. It catalyses the reaction a plastoquinone + NADH + (n+1) H(+)(in) = a plastoquinol + NAD(+) + n H(+)(out). It carries out the reaction a plastoquinone + NADPH + (n+1) H(+)(in) = a plastoquinol + NADP(+) + n H(+)(out). NDH-1 shuttles electrons from an unknown electron donor, via FMN and iron-sulfur (Fe-S) centers, to quinones in the respiratory and/or the photosynthetic chain. The immediate electron acceptor for the enzyme in this species is believed to be plastoquinone. Couples the redox reaction to proton translocation, and thus conserves the redox energy in a proton gradient. Cyanobacterial NDH-1 also plays a role in inorganic carbon-concentration. The polypeptide is NAD(P)H-quinone oxidoreductase subunit H (Microcystis aeruginosa (strain NIES-843 / IAM M-2473)).